Reading from the N-terminus, the 691-residue chain is Elongation factor G (691 aa).

A tr-type G domain is found at E8–I282. GTP contacts are provided by residues A17–T24, D81–H85, and N135–D138.

This sequence belongs to the TRAFAC class translation factor GTPase superfamily. Classic translation factor GTPase family. EF-G/EF-2 subfamily.

The protein resides in the cytoplasm. In terms of biological role, catalyzes the GTP-dependent ribosomal translocation step during translation elongation. During this step, the ribosome changes from the pre-translocational (PRE) to the post-translocational (POST) state as the newly formed A-site-bound peptidyl-tRNA and P-site-bound deacylated tRNA move to the P and E sites, respectively. Catalyzes the coordinated movement of the two tRNA molecules, the mRNA and conformational changes in the ribosome. This Synechococcus sp. (strain WH7803) protein is Elongation factor G.